The sequence spans 616 residues: Dihydroxy-acid dehydratase (616 aa).

Aspartate 81 serves as a coordination point for Mg(2+). [2Fe-2S] cluster is bound at residue cysteine 122. 2 residues coordinate Mg(2+): aspartate 123 and lysine 124. Lysine 124 is subject to N6-carboxylysine. Cysteine 195 is a binding site for [2Fe-2S] cluster. Position 491 (glutamate 491) interacts with Mg(2+). Residue serine 517 is the Proton acceptor of the active site.

This sequence belongs to the IlvD/Edd family. As to quaternary structure, homodimer. [2Fe-2S] cluster is required as a cofactor. Requires Mg(2+) as cofactor.

The enzyme catalyses (2R)-2,3-dihydroxy-3-methylbutanoate = 3-methyl-2-oxobutanoate + H2O. It carries out the reaction (2R,3R)-2,3-dihydroxy-3-methylpentanoate = (S)-3-methyl-2-oxopentanoate + H2O. It participates in amino-acid biosynthesis; L-isoleucine biosynthesis; L-isoleucine from 2-oxobutanoate: step 3/4. The protein operates within amino-acid biosynthesis; L-valine biosynthesis; L-valine from pyruvate: step 3/4. Its function is as follows. Functions in the biosynthesis of branched-chain amino acids. Catalyzes the dehydration of (2R,3R)-2,3-dihydroxy-3-methylpentanoate (2,3-dihydroxy-3-methylvalerate) into 2-oxo-3-methylpentanoate (2-oxo-3-methylvalerate) and of (2R)-2,3-dihydroxy-3-methylbutanoate (2,3-dihydroxyisovalerate) into 2-oxo-3-methylbutanoate (2-oxoisovalerate), the penultimate precursor to L-isoleucine and L-valine, respectively. The chain is Dihydroxy-acid dehydratase from Erwinia tasmaniensis (strain DSM 17950 / CFBP 7177 / CIP 109463 / NCPPB 4357 / Et1/99).